The chain runs to 185 residues: Elongation factor P (185 aa).

This sequence belongs to the elongation factor P family.

It localises to the cytoplasm. It participates in protein biosynthesis; polypeptide chain elongation. Involved in peptide bond synthesis. Stimulates efficient translation and peptide-bond synthesis on native or reconstituted 70S ribosomes in vitro. Probably functions indirectly by altering the affinity of the ribosome for aminoacyl-tRNA, thus increasing their reactivity as acceptors for peptidyl transferase. The sequence is that of Elongation factor P from Aromatoleum aromaticum (strain DSM 19018 / LMG 30748 / EbN1) (Azoarcus sp. (strain EbN1)).